The primary structure comprises 509 residues: Maturase K (509 aa).

This sequence belongs to the intron maturase 2 family. MatK subfamily.

The protein localises to the plastid. Its subcellular location is the chloroplast. Functionally, usually encoded in the trnK tRNA gene intron. Probably assists in splicing its own and other chloroplast group II introns. This Pereskia aculeata (Barbados gooseberry) protein is Maturase K.